Reading from the N-terminus, the 20-residue chain is Pregnancy-associated glycoprotein 61C (20 aa).

The protein belongs to the peptidase A1 family. In terms of processing, N-glycosylated. As to expression, expressed in chorionic epithelium (trophectoderm).

Its subcellular location is the secreted. It localises to the extracellular space. In Bubalus bubalis (Domestic water buffalo), this protein is Pregnancy-associated glycoprotein 61C.